Consider the following 85-residue polypeptide: uncharacterized protein (85 aa).

Belongs to the BolA/IbaG family.

This is an uncharacterized protein from Haemophilus influenzae (strain ATCC 51907 / DSM 11121 / KW20 / Rd).